Here is a 225-residue protein sequence, read N- to C-terminus: UPF0758 protein Mhun_2739 (225 aa).

Residues 102-225 (RITEPDHILK…VTSLRSLGYL (124 aa)) enclose the MPN domain. Zn(2+) is bound by residues His174, His176, and Asp187. A JAMM motif motif is present at residues 174 to 187 (HNHPSGNPEPSSED).

The protein belongs to the UPF0758 family.

The sequence is that of UPF0758 protein Mhun_2739 from Methanospirillum hungatei JF-1 (strain ATCC 27890 / DSM 864 / NBRC 100397 / JF-1).